Consider the following 471-residue polypeptide: Rho GTPase-activating protein 15 (471 aa).

A disordered region spans residues 1-20; the sequence is MQKSTNSDIPVETLNPTRQG. At serine 43 the chain carries Phosphoserine. The PH domain maps to 79–189; sequence MVEKEGYLQK…WFHAIKNAID (111 aa). Residues serine 196, serine 199, and serine 243 each carry the phosphoserine modification. The Rho-GAP domain maps to 281 to 470; that stretch reads SHLHTLCERE…LMLSAYDQIF (190 aa).

It is found in the cytoplasm. The protein resides in the membrane. In terms of biological role, GTPase activator for the Rho-type GTPases by converting them to an inactive GDP-bound state. Has activity toward RAC1. Overexpression results in an increase in actin stress fibers and cell contraction. In Bos taurus (Bovine), this protein is Rho GTPase-activating protein 15 (ARHGAP15).